Reading from the N-terminus, the 227-residue chain is Testis-expressed protein 30 (227 aa).

The protein is Testis-expressed protein 30 (TEX30) of Homo sapiens (Human).